The chain runs to 352 residues: Coproporphyrin III ferrochelatase (352 aa).

2 residues coordinate Fe-coproporphyrin III: S52 and Y121. Residues H181 and E269 each contribute to the Fe(2+) site.

The protein belongs to the ferrochelatase family.

Its subcellular location is the cytoplasm. The catalysed reaction is Fe-coproporphyrin III + 2 H(+) = coproporphyrin III + Fe(2+). Its pathway is porphyrin-containing compound metabolism; protoheme biosynthesis. Functionally, involved in coproporphyrin-dependent heme b biosynthesis. Catalyzes the insertion of ferrous iron into coproporphyrin III to form Fe-coproporphyrin III. In Nocardia farcinica (strain IFM 10152), this protein is Coproporphyrin III ferrochelatase.